A 95-amino-acid chain; its full sequence is Aspartyl/glutamyl-tRNA(Asn/Gln) amidotransferase subunit C (95 aa).

Belongs to the GatC family. Heterotrimer of A, B and C subunits.

It catalyses the reaction L-glutamyl-tRNA(Gln) + L-glutamine + ATP + H2O = L-glutaminyl-tRNA(Gln) + L-glutamate + ADP + phosphate + H(+). The enzyme catalyses L-aspartyl-tRNA(Asn) + L-glutamine + ATP + H2O = L-asparaginyl-tRNA(Asn) + L-glutamate + ADP + phosphate + 2 H(+). Allows the formation of correctly charged Asn-tRNA(Asn) or Gln-tRNA(Gln) through the transamidation of misacylated Asp-tRNA(Asn) or Glu-tRNA(Gln) in organisms which lack either or both of asparaginyl-tRNA or glutaminyl-tRNA synthetases. The reaction takes place in the presence of glutamine and ATP through an activated phospho-Asp-tRNA(Asn) or phospho-Glu-tRNA(Gln). This Maricaulis maris (strain MCS10) (Caulobacter maris) protein is Aspartyl/glutamyl-tRNA(Asn/Gln) amidotransferase subunit C.